A 117-amino-acid polypeptide reads, in one-letter code: Prefoldin subunit beta (117 aa).

This sequence belongs to the prefoldin subunit beta family. In terms of assembly, heterohexamer of two alpha and four beta subunits.

Its subcellular location is the cytoplasm. Functionally, molecular chaperone capable of stabilizing a range of proteins. Seems to fulfill an ATP-independent, HSP70-like function in archaeal de novo protein folding. The polypeptide is Prefoldin subunit beta (Methanosarcina barkeri (strain Fusaro / DSM 804)).